The primary structure comprises 85 residues: Kappa-theraphotoxin-Gr1a (85 aa).

Residues 1 to 21 (MKTSVFAAILGLALFAVLCSG) form the signal peptide. Residues 22 to 49 (SELQEKDLKETLLSAIMETALEAQPEER) constitute a propeptide that is removed on maturation. 3 disulfide bridges follow: Cys-51–Cys-65, Cys-58–Cys-70, and Cys-64–Cys-77. The interval 53–55 (YLF) is involved in active face.

The protein belongs to the neurotoxin 10 (Hwtx-1) family. 09 (HaTx) subfamily. Expressed by the venom gland.

It is found in the secreted. Functionally, inhibits Kv2.1/KCNB1 and Kv4.2/KCND2 voltage-gated potassium channels. Acts as a gating modifier by shifting channel openings to more depolarized voltages and acts via the occupancy of multiple binding sites on the channel. The toxin binding sites are situated on the S3-S4 extracellular linker of the channel. At least two hanatoxin molecules can occupy the Kv2.1/KCNB1 channel, and maybe more (three or four). Can also inhibit calcium channels (Cav2.1/CACNA1A). Needs to partition into the membrane in order to bind to the channel. The sequence is that of Kappa-theraphotoxin-Gr1a from Grammostola rosea (Chilean rose tarantula).